A 203-amino-acid polypeptide reads, in one-letter code: Glycerol-3-phosphate acyltransferase (203 aa).

The next 4 helical transmembrane spans lie at 7–27 (TLLM…VLVC), 82–102 (AVSL…PVFF), 118–138 (APIG…LLLI), and 141–161 (YSSL…WWLD).

Belongs to the PlsY family. In terms of assembly, probably interacts with PlsX.

The protein localises to the cell inner membrane. The catalysed reaction is an acyl phosphate + sn-glycerol 3-phosphate = a 1-acyl-sn-glycero-3-phosphate + phosphate. It functions in the pathway lipid metabolism; phospholipid metabolism. Functionally, catalyzes the transfer of an acyl group from acyl-phosphate (acyl-PO(4)) to glycerol-3-phosphate (G3P) to form lysophosphatidic acid (LPA). This enzyme utilizes acyl-phosphate as fatty acyl donor, but not acyl-CoA or acyl-ACP. This Shewanella baltica (strain OS223) protein is Glycerol-3-phosphate acyltransferase.